The following is a 485-amino-acid chain: 3-isopropylmalate dehydratase large subunit (485 aa).

Disordered regions lie at residues Met-1–Gly-20 and Pro-73–Pro-92. [4Fe-4S] cluster contacts are provided by Cys-364, Cys-424, and Cys-427.

It belongs to the aconitase/IPM isomerase family. LeuC type 1 subfamily. Heterodimer of LeuC and LeuD. The cofactor is [4Fe-4S] cluster.

It catalyses the reaction (2R,3S)-3-isopropylmalate = (2S)-2-isopropylmalate. It functions in the pathway amino-acid biosynthesis; L-leucine biosynthesis; L-leucine from 3-methyl-2-oxobutanoate: step 2/4. Its function is as follows. Catalyzes the isomerization between 2-isopropylmalate and 3-isopropylmalate, via the formation of 2-isopropylmaleate. This is 3-isopropylmalate dehydratase large subunit from Rhodopirellula baltica (strain DSM 10527 / NCIMB 13988 / SH1).